Reading from the N-terminus, the 276-residue chain is ESX-2 secretion-associated protein EspG2 (276 aa).

It belongs to the EspG family. In terms of assembly, interacts specifically with ESX-2-dependent PE/PPE proteins.

The protein resides in the cytoplasm. Its function is as follows. Specific chaperone for cognate PE/PPE proteins. Plays an important role in preventing aggregation of PE/PPE dimers. The chain is ESX-2 secretion-associated protein EspG2 from Mycobacterium tuberculosis (strain CDC 1551 / Oshkosh).